Consider the following 385-residue polypeptide: tRNA (guanine(26)-N(2))-dimethyltransferase (385 aa).

The region spanning 1–379 is the Trm1 methyltransferase domain; the sequence is MNITEGVVEL…ATIAEIRSAT (379 aa). S-adenosyl-L-methionine-binding residues include Arg37, Arg67, Asp82, Asp108, and Ala109. Zn(2+) is bound by residues Cys247, Cys250, Cys267, and Cys270.

The protein belongs to the class I-like SAM-binding methyltransferase superfamily. Trm1 family.

The enzyme catalyses guanosine(26) in tRNA + 2 S-adenosyl-L-methionine = N(2)-dimethylguanosine(26) in tRNA + 2 S-adenosyl-L-homocysteine + 2 H(+). In terms of biological role, dimethylates a single guanine residue at position 26 of a number of tRNAs using S-adenosyl-L-methionine as donor of the methyl groups. In Haloquadratum walsbyi (strain DSM 16790 / HBSQ001), this protein is tRNA (guanine(26)-N(2))-dimethyltransferase.